A 162-amino-acid polypeptide reads, in one-letter code: uncharacterized protein (162 aa).

It belongs to the M.jannaschii MJ0150/MJ0739/MJ0745/MJ1460/MJ1642 family.

This is an uncharacterized protein from Methanocaldococcus jannaschii (strain ATCC 43067 / DSM 2661 / JAL-1 / JCM 10045 / NBRC 100440) (Methanococcus jannaschii).